We begin with the raw amino-acid sequence, 122 residues long: Large ribosomal subunit protein uL24 (122 aa).

The disordered stretch occupies residues 43 to 64 (IRKHHRRDMPTPQGGTTKGGII).

Belongs to the universal ribosomal protein uL24 family. As to quaternary structure, part of the 50S ribosomal subunit.

In terms of biological role, one of two assembly initiator proteins, it binds directly to the 5'-end of the 23S rRNA, where it nucleates assembly of the 50S subunit. Functionally, one of the proteins that surrounds the polypeptide exit tunnel on the outside of the subunit. This chain is Large ribosomal subunit protein uL24, found in Cutibacterium acnes (strain DSM 16379 / KPA171202) (Propionibacterium acnes).